A 351-amino-acid chain; its full sequence is Glycerol-3-phosphate dehydrogenase [NAD(P)+] (351 aa).

4 residues coordinate NADPH: serine 18, tryptophan 19, arginine 38, and lysine 122. Lysine 122, glycine 153, and serine 155 together coordinate sn-glycerol 3-phosphate. Alanine 157 provides a ligand contact to NADPH. 5 residues coordinate sn-glycerol 3-phosphate: lysine 208, aspartate 261, serine 271, arginine 272, and asparagine 273. The active-site Proton acceptor is lysine 208. Arginine 272 provides a ligand contact to NADPH. Glutamate 297 provides a ligand contact to NADPH.

Belongs to the NAD-dependent glycerol-3-phosphate dehydrogenase family.

It is found in the cytoplasm. The catalysed reaction is sn-glycerol 3-phosphate + NAD(+) = dihydroxyacetone phosphate + NADH + H(+). It catalyses the reaction sn-glycerol 3-phosphate + NADP(+) = dihydroxyacetone phosphate + NADPH + H(+). It functions in the pathway membrane lipid metabolism; glycerophospholipid metabolism. In terms of biological role, catalyzes the reduction of the glycolytic intermediate dihydroxyacetone phosphate (DHAP) to sn-glycerol 3-phosphate (G3P), the key precursor for phospholipid synthesis. The chain is Glycerol-3-phosphate dehydrogenase [NAD(P)+] from Bordetella pertussis (strain Tohama I / ATCC BAA-589 / NCTC 13251).